A 226-amino-acid polypeptide reads, in one-letter code: MSQAPIELKGSSFTLSVVHLHNSQPEVIRPALIAKVGQAPAFLKNAPVVINITDVNGSVEWHEMLRMFSAAGLHVIGVSGCRDETQKQAVLHAGLPLLSEGKGAVKKAPVAPATPVAAKTKIISTPVRSGQQIYARSGDLIVTSHVSAGAELIADGNIHVYGIMRGRALAGAAGDSGSQIFCSHLSAELVSIAGQYWLSDQIPENYYGQAAHLTLSSGALTIQSLF.

This sequence belongs to the MinC family. In terms of assembly, interacts with MinD and FtsZ.

Functionally, cell division inhibitor that blocks the formation of polar Z ring septums. Rapidly oscillates between the poles of the cell to destabilize FtsZ filaments that have formed before they mature into polar Z rings. Prevents FtsZ polymerization. This is Probable septum site-determining protein MinC from Edwardsiella ictaluri (strain 93-146).